Reading from the N-terminus, the 402-residue chain is Protein prenyltransferase alpha subunit repeat-containing protein 1 (402 aa).

At Ala-2 the chain carries N-acetylalanine. 4 PFTA repeats span residues 87-120, 122-155, 180-213, and 219-252; these read LIDV…LNPI, DLHL…QETS, EMEV…KLDV, and ELSS…SQTV. Residues 263–282 form a disordered region; that stretch reads LRSEPALVPPKDEEAAVSTE. The stretch at 295 to 328 is one PFTA 5 repeat; that stretch reads EVEFSTDLIDSYPGHETLWCHRRHIFYLQHHLNA.

This sequence belongs to the protein prenyltransferase subunit alpha family.

The sequence is that of Protein prenyltransferase alpha subunit repeat-containing protein 1 (PTAR1) from Homo sapiens (Human).